Consider the following 180-residue polypeptide: Large ribosomal subunit protein uL5c (180 aa).

The protein belongs to the universal ribosomal protein uL5 family. Part of the 50S ribosomal subunit; contacts the 5S rRNA.

Its subcellular location is the plastid. It localises to the chloroplast. Functionally, binds 5S rRNA, forms part of the central protuberance of the 50S subunit. The chain is Large ribosomal subunit protein uL5c (rpl5) from Chlorella vulgaris (Green alga).